Reading from the N-terminus, the 159-residue chain is Large ribosomal subunit protein uL15 (159 aa).

The disordered stretch occupies residues 1-46 (MKLNELSPSVPKKNRKRIGRGNSSGWGKTAGKGSNGQNSRAGGGVK). A compositionally biased stretch (gly residues) spans 22 to 34 (NSSGWGKTAGKGS).

Belongs to the universal ribosomal protein uL15 family. As to quaternary structure, part of the 50S ribosomal subunit.

In terms of biological role, binds to the 23S rRNA. In Fusobacterium nucleatum subsp. nucleatum (strain ATCC 25586 / DSM 15643 / BCRC 10681 / CIP 101130 / JCM 8532 / KCTC 2640 / LMG 13131 / VPI 4355), this protein is Large ribosomal subunit protein uL15.